A 301-amino-acid chain; its full sequence is Glycine--tRNA ligase alpha subunit (301 aa).

Belongs to the class-II aminoacyl-tRNA synthetase family. Tetramer of two alpha and two beta subunits.

The protein localises to the cytoplasm. It catalyses the reaction tRNA(Gly) + glycine + ATP = glycyl-tRNA(Gly) + AMP + diphosphate. This chain is Glycine--tRNA ligase alpha subunit, found in Variovorax paradoxus (strain S110).